A 1431-amino-acid chain; its full sequence is Caskin-1 (1431 aa).

6 ANK repeats span residues 48–77 (DGFSALHHAALNGNTELISLLLEAQAAVDI), 81–110 (KGMRPLHYAAWQGRKEPMKLVLKAGSAVNV), 114–143 (EGHIPLHLAAQHGHYDVSEMLLQHQSNPCM), 147–176 (SGKTPLDLACEFGRVGVVQLLLSSNMCAAL), 188–217 (NGTSPLHLAAKNGHIDIIRLLLQAGIDINR), and 220–249 (KSGTALHEAALCGKTEVVRLLLDSGINAQV). Residue Tyr-253 is modified to Phosphotyrosine. In terms of domain architecture, SH3 spans 281 to 347 (SAALQVRATK…PSSLGEAIVK (67 aa)). The interval 348–372 (RAGSRTGSEPSPPQGGGSLGPSAPP) is disordered. A Phosphoserine modification is found at Ser-358. A CASK-binding region spans residues 375-471 (IWVLRKPFAG…PKKLESASAS (97 aa)). Position 398 is an omega-N-methylarginine (Arg-398). Residues 420–430 (SQKSVSESSPG) are compositionally biased toward polar residues. Positions 420 to 471 (SQKSVSESSPGDSPVKPPEGSSGAARSQPPAAHAGQVYGEQPPKKLESASAS) are disordered. 2 positions are modified to phosphoserine: Ser-423 and Ser-432. 2 SAM domains span residues 476-539 (KSAE…LNIP) and 545-609 (HKPA…LAEL). A phosphoserine mark is found at Ser-637 and Ser-650. The segment covering 669–679 (LSGPAEAGAAA) has biased composition (low complexity). Disordered regions lie at residues 669–1000 (LSGP…TGSA) and 1016–1041 (GGGGRAIRRPPEGHPTPRPASPEPGR). The segment covering 692–712 (RTTSRESSLSGRARHISSSQE) has biased composition (polar residues). Ser-723 and Ser-728 each carry phosphoserine. Position 741 is a phosphothreonine (Thr-741). Ser-791 carries the post-translational modification Phosphoserine. Pro residues predominate over residues 848–860 (PPAPGPAPPPVPA). Phosphoserine is present on residues Ser-891, Ser-893, and Ser-989. Over residues 1028–1037 (GHPTPRPASP) the composition is skewed to pro residues. Thr-1067 carries the post-translational modification Phosphothreonine. Phosphoserine is present on Ser-1069. Disordered stretches follow at residues 1072–1372 (VTGL…RQKL) and 1389–1410 (KIRQEDGQGPRPSSIEEKSTGS). Positions 1148–1160 (DTVKRRPKAKEPD) are enriched in basic and acidic residues. Pro residues predominate over residues 1191 to 1215 (PELPPPPPPAEPPPADLMQLPPLPL). Residues 1236–1247 (QPVSKIQGSPTP) show a composition bias toward polar residues. Residue Ser-1259 is modified to Phosphoserine. Phosphothreonine is present on Thr-1268. Pro residues predominate over residues 1268 to 1283 (TPPPVSPKPPPPPTAP). Low complexity-rich tracts occupy residues 1284-1299 (KPAKALAGLQSSSATP), 1309-1327 (PPAALIKPASSPPSQSASP), and 1345-1359 (PRAAASVVSGPPVAS). The residue at position 1363 (Ser-1363) is a Phosphoserine. A compositionally biased stretch (basic and acidic residues) spans 1389–1407 (KIRQEDGQGPRPSSIEEKS).

In terms of assembly, binds the CaM kinase domain of CASK. Forms a ternary complex with CASK and LIN7A, LIN7B or LIN7C. Competes with APBA1 that forms a similar complex with CASK and LIN7 proteins. The tripartite complex CASKIN1/CASK/LIN7(A/B/C) binds the cytoplasmic tail of NRXN1. Polymerizes, via the tandem SAM domains, to form long, 8 nM wide fibers, upon which other proteins can assemble.

The protein resides in the cytoplasm. Its function is as follows. May link the scaffolding protein CASK to downstream intracellular effectors. In Mus musculus (Mouse), this protein is Caskin-1 (Caskin1).